Reading from the N-terminus, the 251-residue chain is Thiamine thiazole synthase (251 aa).

NAD(+) contacts are provided by residues S34, 53–54 (EK), G61, V125, and 151–153 (HVD). D153 and H168 together coordinate Fe cation. M216 lines the NAD(+) pocket. R226 is a glycine binding site.

Belongs to the THI4 family. Homooctamer; tetramer of dimers. The cofactor is Fe(2+).

The enzyme catalyses hydrogen sulfide + glycine + NAD(+) = ADP-5-ethyl-4-methylthiazole-2-carboxylate + nicotinamide + 3 H2O + H(+). It participates in cofactor biosynthesis; thiamine diphosphate biosynthesis. In terms of biological role, involved in the biosynthesis of the thiazole moiety of thiamine. Catalyzes the conversion of NAD and glycine to adenosine diphosphate 5-(2-hydroxyethyl)-4-methylthiazole-2-carboxylate (ADT), an adenylated thiazole intermediate, using free sulfide as a source of sulfur. The sequence is that of Thiamine thiazole synthase from Thermococcus kodakarensis (strain ATCC BAA-918 / JCM 12380 / KOD1) (Pyrococcus kodakaraensis (strain KOD1)).